Consider the following 1044-residue polypeptide: Spindle assembly checkpoint serine/threonine-protein kinase bub1 (1044 aa).

Positions Phe-36–Val-204 constitute a BUB1 N-terminal domain. Disordered stretches follow at residues Pro-209–Tyr-259, Val-317–Arg-343, Glu-404–Glu-446, Lys-484–Ser-555, and Ile-685–Gly-705. Over residues Gln-223–Asp-239 the composition is skewed to polar residues. Residues Asn-430–Arg-442 show a composition bias toward polar residues. Positions Ser-504–Thr-518 are enriched in low complexity. The span at Arg-544–Ser-555 shows a compositional bias: polar residues. The residue at position 550 (Thr-550) is a Phosphothreonine. The Protein kinase domain occupies Leu-718–Ile-1044. The ATP site is built by Ala-728, Phe-729, Ala-730, Lys-762, and Asp-809. Asp-861 functions as the Proton acceptor in the catalytic mechanism. Asp-865, Asn-866, and Asp-900 together coordinate ATP.

It belongs to the protein kinase superfamily. Ser/Thr protein kinase family. BUB1 subfamily. Part of the BUB1-BUB3 complex, composed of bub1 and bub3. Interacts with spc7 (when phosphorylated on MELT motifs); to recruit the bub1-bub3 complex to kinetochores. Interacts with mad3. Post-translationally, autophosphorylated.

The protein resides in the nucleus. Its subcellular location is the chromosome. It is found in the centromere. The protein localises to the kinetochore. It carries out the reaction L-seryl-[protein] + ATP = O-phospho-L-seryl-[protein] + ADP + H(+). It catalyses the reaction L-threonyl-[protein] + ATP = O-phospho-L-threonyl-[protein] + ADP + H(+). Functionally, involved in mitotic spindle assembly checkpoint signaling, a process that delays anaphase until chromosomes are bioriented on the spindle, and in the repair of incorrect mitotic kinetochore-spindle microtubule attachments. Acts as a kinetochore scaffold for the recruitment of other spindle assembly checkpoint components. This chain is Spindle assembly checkpoint serine/threonine-protein kinase bub1, found in Schizosaccharomyces pombe (strain 972 / ATCC 24843) (Fission yeast).